Reading from the N-terminus, the 239-residue chain is Ribosomal RNA small subunit methyltransferase G (239 aa).

S-adenosyl-L-methionine is bound by residues Gly-78, Phe-83, 129 to 130 (AE), and Arg-148.

It belongs to the methyltransferase superfamily. RNA methyltransferase RsmG family.

The protein localises to the cytoplasm. In terms of biological role, specifically methylates the N7 position of a guanine in 16S rRNA. In Clostridium botulinum (strain Kyoto / Type A2), this protein is Ribosomal RNA small subunit methyltransferase G.